The primary structure comprises 109 residues: Phosphoribosyl-ATP pyrophosphatase (109 aa).

The protein belongs to the PRA-PH family.

It is found in the cytoplasm. It carries out the reaction 1-(5-phospho-beta-D-ribosyl)-ATP + H2O = 1-(5-phospho-beta-D-ribosyl)-5'-AMP + diphosphate + H(+). It participates in amino-acid biosynthesis; L-histidine biosynthesis; L-histidine from 5-phospho-alpha-D-ribose 1-diphosphate: step 2/9. The protein is Phosphoribosyl-ATP pyrophosphatase of Geobacter metallireducens (strain ATCC 53774 / DSM 7210 / GS-15).